The chain runs to 24 residues: SM-11044-binding protein (24 aa).

Its function is as follows. May mediate relaxation of depolarized colon tonus. It binds iodocyanopindolol and SM-11044. The polypeptide is SM-11044-binding protein (Rattus norvegicus (Rat)).